The chain runs to 342 residues: Uroporphyrinogen decarboxylase (342 aa).

Substrate is bound by residues 22–26, F42, D72, Y146, S201, and H317; that span reads RQAGR.

It belongs to the uroporphyrinogen decarboxylase family. Homodimer.

The protein resides in the cytoplasm. It catalyses the reaction uroporphyrinogen III + 4 H(+) = coproporphyrinogen III + 4 CO2. The protein operates within porphyrin-containing compound metabolism; protoporphyrin-IX biosynthesis; coproporphyrinogen-III from 5-aminolevulinate: step 4/4. Its function is as follows. Catalyzes the decarboxylation of four acetate groups of uroporphyrinogen-III to yield coproporphyrinogen-III. The sequence is that of Uroporphyrinogen decarboxylase from Orientia tsutsugamushi (strain Ikeda) (Rickettsia tsutsugamushi).